The primary structure comprises 80 residues: MTQHKSSMVYIPTTKEAKRRNGKSEGILNTIEEVVEKLYWTYYIHLPFYLMASFDSFFLHVFFLTIFSLSFFGILKYCFL.

Residues 54–74 (FDSFFLHVFFLTIFSLSFFGI) form a helical membrane-spanning segment.

As to quaternary structure, interacts with the serine palmitoyltransferase complex LCB1-LCB2. Component of the SPOTS complex, at least composed of LCB1/2 (LCB1 and/or LCB2), ORM1/2 (ORM1 and/or ORM2), SAC1 and TSC3.

It is found in the endoplasmic reticulum membrane. In terms of biological role, stimulates the activity of serine palmitoyltransferase (SPT), and thus plays a role in the biosynthesis of sphingolipids. This Saccharomyces cerevisiae (strain ATCC 204508 / S288c) (Baker's yeast) protein is Serine palmitoyltransferase-regulating protein TSC3 (TSC3).